We begin with the raw amino-acid sequence, 535 residues long: Calcium-dependent protein kinase 1 (535 aa).

Residues 1-34 are disordered; sequence MGCNQSKSANDVRGNKVNNVNSKKKNNKREDIND. The N-myristoyl glycine moiety is linked to residue G2. C3 carries S-palmitoyl cysteine lipidation. The region spanning 57-324 is the Protein kinase domain; it reads YFKVRKLGSG…AEEALNSRWI (268 aa). Residues 63–71 and K86 contribute to the ATP site; that span reads LGSGAYGEV. At S65 the chain carries Phosphoserine. S117 bears the Phosphoserine mark. The active-site Proton acceptor is the D190. 2 positions are modified to phosphoserine: S216 and S219. A Phosphothreonine modification is found at T230. The residue at position 334 (S334) is a Phosphoserine. Positions 345–352 match the J domain autoinhibitory motif motif; that stretch reads NMRKFEGS. The segment at 345–363 is j domain; it reads NMRKFEGSQKLAQAAILFI. A J domain interacts with the EF-hand domains motif is present at residues 353 to 363; sequence QKLAQAAILFI. EF-hand domains are found at residues 371-406, 415-450, 451-486, and 497-532; these read EERK…LRNF, NVEE…KQIL, FSEE…GFYF, and VSEK…ICDN. Ca(2+)-binding residues include D384, N386, D388, Q390, E395, D428, D430, N432, Y434, E439, D464, D466, S468, K470, E475, D510, N512, D514, M516, and E521.

This sequence belongs to the protein kinase superfamily. Ser/Thr protein kinase family. CDPK subfamily. Monomer. Requires Mg(2+) as cofactor. Post-translationally, myristoylated. Myristoylation and palmitoylation are required for the localization to the parasitophorous vacuole membrane. In terms of processing, palmitoylated. Palmitoylation increases in merozoites in response to low level of extracellular K(+) in the host blood. Myristoylation and palmitoylation are required for the localization to the parasitophorous vacuole membrane. Phosphorylation at Thr-230 may regulate CDPK1 kinase activity. Phosphorylation increases in response to an increase in intracellular Ca(2+) levels. Autophosphorylated in vitro. Autophosphorylation does not affect membrane localization in vitro.

The protein resides in the membrane. Its subcellular location is the cell membrane. It localises to the parasitophorous vacuole membrane. The protein localises to the cytoplasm. It is found in the cell projection. The protein resides in the cilium. Its subcellular location is the flagellum. It localises to the host cell membrane. It carries out the reaction L-seryl-[protein] + ATP = O-phospho-L-seryl-[protein] + ADP + H(+). It catalyses the reaction L-threonyl-[protein] + ATP = O-phospho-L-threonyl-[protein] + ADP + H(+). Activated by calcium. Upon calcium binding to the EF-hand domains, the C-terminus of the junction domain (J domain) undergoes a conformational change which results in the dissociation of the pseudo-substrate inhibitory motif from the catalytic domain. This, in turn may facilitate the autophosphorylation of the activation loop at Thr-230, which leads to the kinase activation. In terms of biological role, calcium-dependent protein kinase which acts as a sensor and effector of intracellular Ca(2+) levels probably in part downstream of cGMP-activated PKG kinase. During the liver stage, involved in sporozoite motility and thus in sporozoite invasion of host hepatocytes, probably together with CDPK4 and CDPK5. In the mosquito midgut and during the last stage of male gamete exflagellation, may play a role in the rupture of the host erythrocyte membrane. In the mosquito midgut, required for the differentiation of the zygote into the ookinete by promoting the translational activation of a subset of repressed mRNAs; these mRNAs are kept repressed in the zygote by the DOZI- or CITH-containing mRNP complexes. Dispensable during the asexual blood stage. The polypeptide is Calcium-dependent protein kinase 1 (Plasmodium yoelii yoelii).